A 133-amino-acid chain; its full sequence is Glycophorin-A (133 aa).

O-linked (GalNAc...) threonine glycosylation is found at threonine 1 and threonine 6. The segment at 1–34 (TETPVTGEQGSATPGNVSNATVTAGKPSATSPGV) is disordered. The Extracellular segment spans residues 1-62 (TETPVTGEQG…SYHQDFSHAE (62 aa)). O-linked (GalNAc...) serine glycosylation is present at serine 11. Residue threonine 13 is glycosylated (O-linked (GalNAc...) threonine). Residue asparagine 19 is glycosylated (N-linked (GlcNAc...) asparagine). Threonine 21, threonine 23, and threonine 30 each carry an O-linked (GalNAc...) threonine glycan. Serine 31 is a glycosylation site (O-linked (GalNAc...) serine). An N-linked (GlcNAc...) asparagine glycan is attached at asparagine 39. O-linked (GalNAc...) threonine glycans are attached at residues threonine 41 and threonine 48. A helical transmembrane segment spans residues 63 to 85 (ITGIIFAVMAGLLLIIFLIAYLI). Over 86-133 (RRMIKKPLPVPKPQDSPDIGTENTADPSELQDTEDPPLTSVEIETPAS) the chain is Cytoplasmic. A disordered region spans residues 93–133 (LPVPKPQDSPDIGTENTADPSELQDTEDPPLTSVEIETPAS).

Belongs to the glycophorin-A family. In terms of assembly, homodimer. Component of the ankyrin-1 complex in the erythrocyte, composed of ANK1, RHCE, RHAG, SLC4A1, EPB42, GYPA, GYPB and AQP1. Interacts with SLC4A1; a GYPA monomer is bound at each end of the SLC4A1 dimer forming a heterotetramer.

Its subcellular location is the membrane. Its function is as follows. Component of the ankyrin-1 complex, a multiprotein complex involved in the stability and shape of the erythrocyte membrane. Glycophorin A is the major intrinsic membrane protein of the erythrocyte. The N-terminal glycosylated segment, which lies outside the erythrocyte membrane, has MN blood group receptors. Appears to be important for the function of SLC4A1 and is required for high activity of SLC4A1. May be involved in translocation of SLC4A1 to the plasma membrane. In Sus scrofa (Pig), this protein is Glycophorin-A.